The following is a 227-amino-acid chain: uncharacterized protein (227 aa).

A Response regulatory domain is found at 2–115 (KILMIEDNVS…TLVARIKAVI (114 aa)). A 4-aspartylphosphate modification is found at aspartate 51. Positions 128–226 (EDMIETECFT…VWGVGYKFDE (99 aa)) form a DNA-binding region, ompR/PhoB-type.

Phosphorylated by YclK.

The protein resides in the cytoplasm. In terms of biological role, could be member of the two-component regulatory system YclK/YclJ. This is an uncharacterized protein from Bacillus subtilis (strain 168).